The primary structure comprises 628 residues: E3 SUMO-protein ligase PIAS3 (628 aa).

An interaction with CCAR2 region spans residues Met-1–Ser-200. Residues Val-11–Leu-45 form the SAP domain. The short motif at Leu-19–Leu-23 is the LXXLL motif element. Residues Lys-46 and Lys-56 each participate in a glycyl lysine isopeptide (Lys-Gly) (interchain with G-Cter in SUMO2) cross-link. Residues Pro-72–Ser-95 are disordered. The 166-residue stretch at Met-115–Leu-280 folds into the PINIT domain. Glycyl lysine isopeptide (Lys-Gly) (interchain with G-Cter in SUMO2) cross-links involve residues Lys-230 and Lys-307. The segment at Pro-312–Asp-393 adopts an SP-RING-type zinc-finger fold. Zn(2+) is bound by residues Cys-343, His-345, Cys-366, and Cys-369. The segment at Leu-450–Asp-460 is SUMO1-binding. Glycyl lysine isopeptide (Lys-Gly) (interchain with G-Cter in SUMO2) cross-links involve residues Lys-466 and Lys-482. The tract at residues Leu-573–Thr-618 is disordered.

The protein belongs to the PIAS family. Binds SUMO1 and UBE2I. Interacts with AR, BCL11A, GFI1, HMGA2, IRF1, MITF, NCOA2, as well as with STAT3, after treatment with IL6, CNTF or OSM and with STAT5, after PRL stimulation. Interacts with PLAG1. Interacts with ZFHX3. Interacts with MTA1. Interacts with CCAR2 (via N-terminus). Interacts with TRIM8. Interacts with PRDM1. In terms of processing, sumoylated. In terms of tissue distribution, widely expressed, with highest levels in lung, kidney and spleen.

The protein resides in the cytoplasm. It is found in the nucleus. Its subcellular location is the nucleus speckle. The protein operates within protein modification; protein sumoylation. Functions as an E3-type small ubiquitin-like modifier (SUMO) ligase, stabilizing the interaction between UBE2I and the substrate, and as a SUMO-tethering factor. Plays a crucial role as a transcriptional coregulation in various cellular pathways, including the STAT pathway and the steroid hormone signaling pathway. The effects of this transcriptional coregulation, transactivation or silencing, may vary depending upon the biological context. Enhances the sumoylation of MTA1 and may participate in its paralog-selective sumoylation. Sumoylates CCAR2 which promotes its interaction with SIRT1. Diminishes the sumoylation of ZFHX3 by preventing the colocalization of ZFHX3 with SUMO1 in the nucleus. The polypeptide is E3 SUMO-protein ligase PIAS3 (Pias3) (Rattus norvegicus (Rat)).